The chain runs to 404 residues: G-protein coupled receptor 182 (404 aa).

At 1 to 57 (MSVKPSWGPGPSEGVTAVPTSDLGEIHNWTELLDLFNHTLSECHVELSQSTKRVVLF) the chain is on the extracellular side. Residues Asn-28 and Asn-37 are each glycosylated (N-linked (GlcNAc...) asparagine). Residues 58–79 (ALYLAMFVVGLVENLLVICVNW) traverse the membrane as a helical segment. Residues 80–90 (RGSGRAGLMNL) lie on the Cytoplasmic side of the membrane. Residues 91 to 113 (YILNMAIADLGIVLSLPVWMLEV) traverse the membrane as a helical segment. Over 114 to 127 (TLDYTWLWGSFSCR) the chain is Extracellular. A disulfide bond links Cys-126 and Cys-202. Residues 128–149 (FTHYFYFVNMYSSIFFLVCLSV) traverse the membrane as a helical segment. Over 150–170 (DRYVTLTSASPSWQRYQHRVR) the chain is Cytoplasmic. A helical membrane pass occupies residues 171–193 (RAMCAGIWVLSAIIPLPEVVHIQ). The Extracellular segment spans residues 194-217 (LVEGPEPMCLFMAPFETYSTWALA). Residues 218-239 (VALSTTILGFLLPFPLITVFNV) traverse the membrane as a helical segment. Residues 240-258 (LTACRLRQPGQPKSRRHCL) are Cytoplasmic-facing. The helical transmembrane segment at 259–280 (LLCAYVAVFVMCWLPYHVTLLL) threads the bilayer. The Extracellular segment spans residues 281-299 (LTLHGTHISLHCHLVHLLY). A helical transmembrane segment spans residues 300–320 (FFYDVIDCFSMLHCVINPILY). Topologically, residues 321–404 (NFLSPHFRGR…ISPTQPLTPS (84 aa)) are cytoplasmic.

The protein belongs to the G-protein coupled receptor 1 family. As to expression, highly expressed in heart, skeletal muscle, immune system, adrenal gland and liver.

The protein localises to the cell membrane. Its function is as follows. Orphan receptor. The protein is G-protein coupled receptor 182 (GPR182) of Homo sapiens (Human).